The sequence spans 735 residues: Rho GTPase-activating protein SYDE1 (735 aa).

Positions 1 to 253 are disordered; it reads MAEPLLRKTF…SPTSFRPYEV (253 aa). Residues 14 to 31 are compositionally biased toward basic and acidic residues; it reads RGREKLPRKKSDAKERGH. Residues 35–46 show a composition bias toward pro residues; that stretch reads RPEPSPPEPEPQ. The segment covering 47–71 has biased composition (low complexity); sequence APEGSQAGAEGPSSPEASRSPARGA. The segment covering 122 to 131 has biased composition (pro residues); that stretch reads PPAPEPPGPQ. Gly residues predominate over residues 211 to 221; that stretch reads GGPGPAAGPGG. 4 positions are modified to phosphoserine: S224, S231, S235, and S244. Positions 249 to 366 constitute a C2 domain; the sequence is RPYEVGPAAR…FRGCQAQQLA (118 aa). Positions 398–604 constitute a Rho-GAP domain; it reads LPLPLLVERE…YLLQSWPDPR (207 aa). S575 bears the Phosphoserine mark. 2 disordered regions span residues 608–651 and 674–696; these read QSPD…SNRY and DYDH…PRVT. Residues S681 and S683 each carry the phosphoserine modification.

Post-translationally, palmitoylated. Probably palmitoylated by ZDHHC3 and ZDHHC7. As to expression, expressed in trophoblast cells of placental villi.

Functionally, GTPase activator for the Rho-type GTPases. As a GCM1 downstream effector, it is involved in placental development and positively regulates trophoblast cells migration. It regulates cytoskeletal remodeling by controlling the activity of Rho GTPases including RHOA, CDC42 and RAC1. The polypeptide is Rho GTPase-activating protein SYDE1 (SYDE1) (Homo sapiens (Human)).